The following is a 917-amino-acid chain: Hexokinase-2 (917 aa).

Methionine 1 carries the post-translational modification N-acetylmethionine. A mitochondrial-binding peptide (MBP) region spans residues 1-16 (MIASHLLAYFFTELNH). 2 Hexokinase domains span residues 16-458 (HDQV…MVTA) and 464-906 (ADQH…LITA). ATP contacts are provided by residues arginine 30 and 84–89 (DLGGTN). A hexokinase small subdomain 1 region spans residues 73–207 (DGTEHGEFLA…DFDIDIVAVV (135 aa)). 84-88 (DLGGT) contributes to the D-glucose 6-phosphate binding site. D-glucose contacts are provided by residues 155-156 (SF), 172-173 (TK), and 208-209 (ND). Residues 208–447 (NDTVGTMMTC…CDVRFLRSED (240 aa)) form a hexokinase large subdomain 1 region. Residues aspartate 209 and threonine 232 each coordinate D-glucose 6-phosphate. D-glucose contacts are provided by residues asparagine 235, glutamate 260, and 291-294 (QLFE). Residue 413 to 415 (DGS) participates in D-glucose 6-phosphate binding. Position 425–426 (425–426 (KR)) interacts with ATP. D-glucose 6-phosphate-binding positions include serine 449 and 532–536 (DLGGT). The tract at residues 521–655 (DGTEKGDFLA…EFDLDVVAVV (135 aa)) is hexokinase small subdomain 2. 532–537 (DLGGTN) provides a ligand contact to ATP. D-glucose-binding positions include 603–604 (SF), 620–621 (TK), and 656–657 (ND). Residues 656-895 (NDTVGTMMTC…CDVSFLQSED (240 aa)) are hexokinase large subdomain 2. D-glucose 6-phosphate is bound by residues aspartate 657 and threonine 680. Threonine 680 contacts ATP. Residues 682-683 (SN), glutamate 708, and 739-742 (QRFE) contribute to the D-glucose site. ATP contacts are provided by residues 747 to 748 (GM), 784 to 788 (TKFLS), and 863 to 867 (TLYKL). D-glucose 6-phosphate is bound by residues 861 to 863 (DGT) and serine 897.

Belongs to the hexokinase family. Monomer. Interacts with TIGAR; the interaction increases hexokinase activity in a hypoxia- and HIF1A-dependent manner. Predominant hexokinase isozyme expressed in insulin-responsive tissues such as skeletal muscle.

Its subcellular location is the mitochondrion outer membrane. It is found in the cytoplasm. The protein resides in the cytosol. The enzyme catalyses a D-hexose + ATP = a D-hexose 6-phosphate + ADP + H(+). It catalyses the reaction D-fructose + ATP = D-fructose 6-phosphate + ADP + H(+). It carries out the reaction D-glucose + ATP = D-glucose 6-phosphate + ADP + H(+). It functions in the pathway carbohydrate metabolism; hexose metabolism. It participates in carbohydrate degradation; glycolysis; D-glyceraldehyde 3-phosphate and glycerone phosphate from D-glucose: step 1/4. Hexokinase activity is specifically inhibited by 2,6-disubstituted glucosamines. Functionally, catalyzes the phosphorylation of hexose, such as D-glucose and D-fructose, to hexose 6-phosphate (D-glucose 6-phosphate and D-fructose 6-phosphate, respectively). Mediates the initial step of glycolysis by catalyzing phosphorylation of D-glucose to D-glucose 6-phosphate. Plays a key role in maintaining the integrity of the outer mitochondrial membrane by preventing the release of apoptogenic molecules from the intermembrane space and subsequent apoptosis. This chain is Hexokinase-2, found in Homo sapiens (Human).